The following is a 476-amino-acid chain: BTB/POZ domain-containing protein KCTD8 (476 aa).

Residues 44-122 (EVVELNVGGQ…LRDKQLALPE (79 aa)) form the BTB domain. Ser78 bears the Phosphoserine mark. Arg80 carries the omega-N-methylarginine modification. The interval 331–412 (SPKQEHEDRK…WMPPPDKRRN (82 aa)) is disordered. A compositionally biased stretch (basic and acidic residues) spans 333–349 (KQEHEDRKRDKVTDKGS). Polar residues predominate over residues 350–391 (ESGTSCNELSTSSCDSHSEASTPQDNPANTQQAAAHQPNTLT). Phosphoserine is present on Ser413.

Interacts as a tetramer with GABBR1 and GABBR2.

It localises to the presynaptic cell membrane. It is found in the postsynaptic cell membrane. Auxiliary subunit of GABA-B receptors that determine the pharmacology and kinetics of the receptor response. Increases agonist potency and markedly alter the G-protein signaling of the receptors by accelerating onset and promoting desensitization. This Mus musculus (Mouse) protein is BTB/POZ domain-containing protein KCTD8 (Kctd8).